The primary structure comprises 199 residues: NAD(P)H dehydrogenase (quinone) (199 aa).

The region spanning 4–190 (VLVLYYSAYG…AGARYQGRRV (187 aa)) is the Flavodoxin-like domain. Residues 10–15 (SAYGHI) and 78–80 (TRF) each bind FMN. Position 12 (Y12) interacts with NAD(+). Residue W98 participates in substrate binding. Residues 113–119 (STATQHG) and H134 contribute to the FMN site.

It belongs to the WrbA family. The cofactor is FMN.

It catalyses the reaction a quinone + NADH + H(+) = a quinol + NAD(+). The enzyme catalyses a quinone + NADPH + H(+) = a quinol + NADP(+). This Methylocella silvestris (strain DSM 15510 / CIP 108128 / LMG 27833 / NCIMB 13906 / BL2) protein is NAD(P)H dehydrogenase (quinone).